The following is a 230-amino-acid chain: Dickkopf-like protein 1 (230 aa).

The first 20 residues, 1-20 (MCRLRVLLLLLPLAFVSSSA), serve as a signal peptide directing secretion. 3 N-linked (GlcNAc...) asparagine glycosylation sites follow: asparagine 31, asparagine 87, and asparagine 102.

In terms of assembly, interacts with SLXL1; Co-localize in seminiferous tubules. Interacts with SLY. In terms of processing, N-glycosylated during spermatogenesis. Not N-glycosylated in mature sperm. As to expression, testis-specific. Abundant in the seminiferous tubules where it is associated with developing spermatocytes. Expressed only in testis (at protein level). Not detectable on postnatal days 4 and 9 but after day 18 it gradually increased as the development of testes progressed. Expressed at high levels in testis and at weak levels in epididymis.

The protein localises to the secreted. It is found in the cytoplasmic vesicle. Its subcellular location is the secretory vesicle. It localises to the acrosome. Its function is as follows. Involved in fertilization by facilitating sperm penetration of the zona pellucida. May promote spermatocyte apoptosis, thereby limiting sperm production. In adults, may reduce testosterone synthesis in Leydig cells. Is not essential either for development or fertility. This is Dickkopf-like protein 1 from Mus musculus (Mouse).